The following is a 404-amino-acid chain: Phosphopentomutase (404 aa).

Residues D10, D303, H308, D344, H345, and H356 each contribute to the Mn(2+) site.

The protein belongs to the phosphopentomutase family. Mn(2+) serves as cofactor.

It localises to the cytoplasm. The catalysed reaction is 2-deoxy-alpha-D-ribose 1-phosphate = 2-deoxy-D-ribose 5-phosphate. The enzyme catalyses alpha-D-ribose 1-phosphate = D-ribose 5-phosphate. It functions in the pathway carbohydrate degradation; 2-deoxy-D-ribose 1-phosphate degradation; D-glyceraldehyde 3-phosphate and acetaldehyde from 2-deoxy-alpha-D-ribose 1-phosphate: step 1/2. In terms of biological role, isomerase that catalyzes the conversion of deoxy-ribose 1-phosphate (dRib-1-P) and ribose 1-phosphate (Rib-1-P) to deoxy-ribose 5-phosphate (dRib-5-P) and ribose 5-phosphate (Rib-5-P), respectively. In Shewanella baltica (strain OS185), this protein is Phosphopentomutase.